Reading from the N-terminus, the 514-residue chain is Peptide chain release factor 3 (514 aa).

The 261-residue stretch at 8 to 268 (KKRRTFAIIS…TFLKFAPEPH (261 aa)) folds into the tr-type G domain. Residues 17–24 (SHPDAGKT), 85–89 (DTPGH), and 139–142 (NKLD) contribute to the GTP site.

This sequence belongs to the TRAFAC class translation factor GTPase superfamily. Classic translation factor GTPase family. PrfC subfamily.

Its subcellular location is the cytoplasm. Increases the formation of ribosomal termination complexes and stimulates activities of RF-1 and RF-2. It binds guanine nucleotides and has strong preference for UGA stop codons. It may interact directly with the ribosome. The stimulation of RF-1 and RF-2 is significantly reduced by GTP and GDP, but not by GMP. The sequence is that of Peptide chain release factor 3 from Streptococcus thermophilus (strain CNRZ 1066).